Reading from the N-terminus, the 198-residue chain is Cytochrome c oxidase subunit 2 (198 aa).

A helical transmembrane segment spans residues Ala1–Met13. The Mitochondrial matrix segment spans residues Leu14–Gln26. A helical transmembrane segment spans residues Glu27–Met54. The Mitochondrial intermembrane segment spans residues Asp55–Leu198. Cu cation contacts are provided by His128, Cys163, Glu165, Cys167, His171, and Met174. Glu165 contributes to the Mg(2+) binding site.

The protein belongs to the cytochrome c oxidase subunit 2 family. As to quaternary structure, component of the cytochrome c oxidase (complex IV, CIV), a multisubunit enzyme composed of 14 subunits. The complex is composed of a catalytic core of 3 subunits MT-CO1, MT-CO2 and MT-CO3, encoded in the mitochondrial DNA, and 11 supernumerary subunits COX4I, COX5A, COX5B, COX6A, COX6B, COX6C, COX7A, COX7B, COX7C, COX8 and NDUFA4, which are encoded in the nuclear genome. The complex exists as a monomer or a dimer and forms supercomplexes (SCs) in the inner mitochondrial membrane with NADH-ubiquinone oxidoreductase (complex I, CI) and ubiquinol-cytochrome c oxidoreductase (cytochrome b-c1 complex, complex III, CIII), resulting in different assemblies (supercomplex SCI(1)III(2)IV(1) and megacomplex MCI(2)III(2)IV(2)). Found in a complex with TMEM177, COA6, COX18, COX20, SCO1 and SCO2. Interacts with TMEM177 in a COX20-dependent manner. Interacts with COX20. Interacts with COX16. It depends on Cu cation as a cofactor.

It is found in the mitochondrion inner membrane. The catalysed reaction is 4 Fe(II)-[cytochrome c] + O2 + 8 H(+)(in) = 4 Fe(III)-[cytochrome c] + 2 H2O + 4 H(+)(out). Its function is as follows. Component of the cytochrome c oxidase, the last enzyme in the mitochondrial electron transport chain which drives oxidative phosphorylation. The respiratory chain contains 3 multisubunit complexes succinate dehydrogenase (complex II, CII), ubiquinol-cytochrome c oxidoreductase (cytochrome b-c1 complex, complex III, CIII) and cytochrome c oxidase (complex IV, CIV), that cooperate to transfer electrons derived from NADH and succinate to molecular oxygen, creating an electrochemical gradient over the inner membrane that drives transmembrane transport and the ATP synthase. Cytochrome c oxidase is the component of the respiratory chain that catalyzes the reduction of oxygen to water. Electrons originating from reduced cytochrome c in the intermembrane space (IMS) are transferred via the dinuclear copper A center (CU(A)) of subunit 2 and heme A of subunit 1 to the active site in subunit 1, a binuclear center (BNC) formed by heme A3 and copper B (CU(B)). The BNC reduces molecular oxygen to 2 water molecules using 4 electrons from cytochrome c in the IMS and 4 protons from the mitochondrial matrix. In Tinamus major (Great tinamou), this protein is Cytochrome c oxidase subunit 2 (MT-CO2).